The primary structure comprises 787 residues: Mitochondrial intermediate peptidase (787 aa).

The N-terminal 36 residues, 1–36 (MQNKVLRGILFKNVPLGYSYNRSIRHPTFGNSIIRW), are a transit peptide targeting the mitochondrion. H573 contacts Zn(2+). E574 is an active-site residue. The Zn(2+) site is built by H577 and H580.

This sequence belongs to the peptidase M3 family. Requires Zn(2+) as cofactor.

The protein resides in the mitochondrion matrix. It catalyses the reaction Release of an N-terminal octapeptide as second stage of processing of some proteins imported into the mitochondrion.. In terms of biological role, cleaves proteins, imported into the mitochondrion, to their mature size. While most mitochondrial precursor proteins are processed to the mature form in one step by mitochondrial processing peptidase (MPP), the sequential cleavage by MIP of an octapeptide after initial processing by MPP is a required step for a subgroup of nuclear-encoded precursor proteins destined for the matrix or the inner membrane. This Vanderwaltozyma polyspora (strain ATCC 22028 / DSM 70294 / BCRC 21397 / CBS 2163 / NBRC 10782 / NRRL Y-8283 / UCD 57-17) (Kluyveromyces polysporus) protein is Mitochondrial intermediate peptidase (OCT1).